A 281-amino-acid chain; its full sequence is Diaminopimelate epimerase (281 aa).

Asn13, Gln51, and Asn70 together coordinate substrate. Residue Cys79 is the Proton donor of the active site. Substrate-binding positions include 80–81, Asn163, Asn196, and 214–215; these read GN and ER. Cys223 serves as the catalytic Proton acceptor. 224 to 225 is a substrate binding site; sequence GS.

It belongs to the diaminopimelate epimerase family. Homodimer.

It localises to the cytoplasm. The catalysed reaction is (2S,6S)-2,6-diaminopimelate = meso-2,6-diaminopimelate. The protein operates within amino-acid biosynthesis; L-lysine biosynthesis via DAP pathway; DL-2,6-diaminopimelate from LL-2,6-diaminopimelate: step 1/1. Catalyzes the stereoinversion of LL-2,6-diaminopimelate (L,L-DAP) to meso-diaminopimelate (meso-DAP), a precursor of L-lysine and an essential component of the bacterial peptidoglycan. This Alcanivorax borkumensis (strain ATCC 700651 / DSM 11573 / NCIMB 13689 / SK2) protein is Diaminopimelate epimerase.